A 267-amino-acid polypeptide reads, in one-letter code: Centromere protein Q (267 aa).

Composition is skewed to basic residues over residues Met1–Arg22 and Lys39–Ser49. A disordered region spans residues Met1–Gly54. Ser49 carries the post-translational modification Phosphoserine. The stretch at Ile100–His202 forms a coiled coil.

This sequence belongs to the CENP-Q/OKP1 family. As to quaternary structure, component of the CENPA-CAD complex, composed of CENPI, CENPK, CENPL, CENPO, CENPP, CENPQ, CENPR and CENPS. The CENPA-CAD complex interacts with the CENPA-NAC complex, at least composed of CENPA, CENPC, CENPH, CENPM, CENPN, CENPT and CENPU. Phosphorylation at Ser-49 is essential for CENPE recruitment to kinetochores and orderly chromosome congression.

The protein resides in the nucleus. Its subcellular location is the chromosome. It localises to the centromere. Functionally, component of the CENPA-CAD (nucleosome distal) complex, a complex recruited to centromeres which is involved in assembly of kinetochore proteins, mitotic progression and chromosome segregation. May be involved in incorporation of newly synthesized CENPA into centromeres via its interaction with the CENPA-NAC complex. Plays an important role in chromosome congression and in the recruitment of CENP-O complex (which comprises CENPO, CENPP, CENPQ and CENPU), CENPE and PLK1 to the kinetochores. The sequence is that of Centromere protein Q (Cenpq) from Mus musculus (Mouse).